Here is a 174-residue protein sequence, read N- to C-terminus: UPF0200 protein PAE1629 (174 aa).

Residue 9–16 (GLPGSGKT) coordinates ATP.

The protein belongs to the UPF0200 family.

The protein is UPF0200 protein PAE1629 of Pyrobaculum aerophilum (strain ATCC 51768 / DSM 7523 / JCM 9630 / CIP 104966 / NBRC 100827 / IM2).